Here is a 198-residue protein sequence, read N- to C-terminus: Recombination protein RecR (198 aa).

The C4-type zinc-finger motif lies at 57–72 (CSVCGHITDKDPCYIC). The region spanning 80–175 (SVICVVQESK…KVTRIAHGLP (96 aa)) is the Toprim domain.

The protein belongs to the RecR family.

May play a role in DNA repair. It seems to be involved in an RecBC-independent recombinational process of DNA repair. It may act with RecF and RecO. In Listeria welshimeri serovar 6b (strain ATCC 35897 / DSM 20650 / CCUG 15529 / CIP 8149 / NCTC 11857 / SLCC 5334 / V8), this protein is Recombination protein RecR.